A 369-amino-acid chain; its full sequence is Biglycan (369 aa).

A signal peptide spans 1–16; that stretch reads MCPLWLLAALLALSQA. Residues 17–37 constitute a propeptide that is removed on maturation; the sequence is LPFEQKAFWDFTLDDGLPMLN. 2 O-linked (Xyl...) (glycosaminoglycan) serine glycosylation sites follow: Ser42 and Ser48. 2 disulfide bridges follow: Cys64–Cys70 and Cys68–Cys77. LRR repeat units lie at residues 83 to 103, 104 to 127, 128 to 151, 152 to 172, 173 to 196, 197 to 221, 222 to 242, 243 to 266, 267 to 290, 291 to 313, 314 to 343, and 344 to 369; these read KAVP…NNDI, SELR…NNKI, SKIH…KNHL, VEIP…DNRI, RKVP…GNPL, ENSG…EAKL, TGIP…HNKI, QAIE…HNQI, RMIE…NNKL, SRVP…TNNI, TKVG…NNPV, and PYWE…NYKK. N-linked (GlcNAc...) asparagine glycosylation is found at Asn271 and Asn312. Cysteines 322 and 355 form a disulfide.

This sequence belongs to the small leucine-rich proteoglycan (SLRP) family. SLRP class I subfamily. In terms of assembly, homodimer. Forms a ternary complex with MFAP2 and ELN. The two attached glycosaminoglycan chains can be either chondroitin sulfate or dermatan sulfate. As to expression, found in several connective tissues, especially in articular cartilages.

Its subcellular location is the secreted. The protein resides in the extracellular space. It is found in the extracellular matrix. Its function is as follows. May be involved in collagen fiber assembly. This chain is Biglycan (BGN), found in Ovis aries (Sheep).